The sequence spans 280 residues: Transcription factor HES-1 (280 aa).

The interval 1-44 (MPADIMEKNSSSPVAATPASVNTTPDKPKTASEHRKSSKPIMEK) is disordered. Over residues 10-21 (SSSPVAATPASV) the composition is skewed to low complexity. Residues 26–35 (DKPKTASEHR) are compositionally biased toward basic and acidic residues. One can recognise a bHLH domain in the interval 34-91 (HRKSSKPIMEKRRRARINESLSQLKTLILDALKKDSSRHSKLEKADILEMTVKHLRNL). Residues 110–143 (YRAGFSECMNEVTRFLSTCEGVNTEVRTRLLGHL) form the Orange domain. Disordered stretches follow at residues 157–200 (GQPH…PPGG) and 254–280 (TSVGPNAVSPSSGPSLTADSMWRPWRN). Pro residues-rich tracts occupy residues 164–174 (QAPPPPPPGPG) and 181–200 (FAPPPPLVPIPGGAAPPPGG). A compositionally biased stretch (polar residues) spans 254–271 (TSVGPNAVSPSSGPSLTA). Positions 275–278 (WRPW) match the WRPW motif motif.

As to quaternary structure, transcription repression requires formation of a complex with a corepressor protein of the Groucho/TLE family. Interacts with SIRT1. Interacts (via WPRW motif) with TLE1, and more weakly with TLE2. Interacts with HES6. Interacts with an FA complex, composed of FANCA, FANCF, FANCG and FANCL, but not of FANCC, nor FANCE.

The protein resides in the nucleus. Functionally, transcriptional repressor of genes that require a bHLH protein for their transcription. May act as a negative regulator of myogenesis by inhibiting the functions of MYOD1 and ASH1. Binds DNA on N-box motifs: 5'-CACNAG-3' with high affinity and on E-box motifs: 5'-CANNTG-3' with low affinity. May play a role in a functional FA core complex response to DNA cross-link damage, being required for the stability and nuclear localization of FA core complex proteins, as well as for FANCD2 monoubiquitination in response to DNA damage. This Bos taurus (Bovine) protein is Transcription factor HES-1 (HES1).